Reading from the N-terminus, the 905-residue chain is Phosphatidylethanolamine N-methyltransferase (905 aa).

Polar residues-rich tracts occupy residues 1–22 (MTNQ…STSV) and 40–58 (DSNG…SSLN). Residues 1–73 (MTNQIPSASS…SEPERYGCTP (73 aa)) are disordered. The Lumenal portion of the chain corresponds to 1-104 (MTNQIPSASS…DPRFSKTPWD (104 aa)). Residues 105–125 (WIVISSILAQVLLFFMTTGAV) traverse the membrane as a helical segment. Over 126-128 (RRY) the chain is Cytoplasmic. Residues 129 to 149 (SMMLCFFFWRISYDAGIGFLL) form a helical membrane-spanning segment. Over 150-209 (HMQSNHRKVVTWISDFGFFDKENHPKLYDLTKKQLISKMDSSYNYDTSPLEFNSWLVFRH) the chain is Lumenal. Residues 210-230 (FVDLILMCDFCSYILMGLAWT) form a helical membrane-spanning segment. The Cytoplasmic portion of the chain corresponds to 231–236 (CWPKVN). Residues 237–257 (IILQFLRIFGGIALIVFNYWV) traverse the membrane as a helical segment. The Lumenal segment spans residues 258-268 (KMDAHRVVRDY). A helical transmembrane segment spans residues 269–289 (AWYWGDFFFLLRSSLVFNGVF). The Cytoplasmic portion of the chain corresponds to 290-313 (ELAPHPMYSVGYAGYYGMSLLTGS). A helical membrane pass occupies residues 314 to 334 (YAVLFASILAHAAQFGFLLFV). At 335-379 (ENPHIERTYGTDINHARLSPRGEDNEFELPPEHDLVGFVNFDFTR) the chain is on the lumenal side. S353 is modified (phosphoserine). The helical transmembrane segment at 380 to 400 (ISDVALLIIALYSIFIILLSS) threads the bilayer. The Cytoplasmic segment spans residues 401–408 (NSHYSQFW). The helical transmembrane segment at 409–429 (AIFQAFVWRFLHSIIHAFILF) threads the bilayer. Residues 430–456 (YQSKSKAWTKHFIRNGESAAYAWSQWK) lie on the Lumenal side of the membrane. The helical transmembrane segment at 457 to 479 (GLYNLTLNMSYISFVMAAWKLYH) threads the bilayer. The Cytoplasmic portion of the chain corresponds to 480–493 (LPSNWTYGLVSLRH). A helical transmembrane segment spans residues 494–514 (ALGFGLIALHIYTSVSIYEDL). At 515-552 (GQYGWFYGDFFLPSRSPKLVYQGIYRYVNNPERFLGCS) the chain is on the lumenal side. A helical transmembrane segment spans residues 553–573 (AYWGLALISSSAWIFLIAILA). Residues 574–905 (QLSNLAIIRL…FDGPSGAKDD (332 aa)) are Cytoplasmic-facing.

The protein belongs to the class VI-like SAM-binding methyltransferase superfamily. CHO2 family.

The protein resides in the endoplasmic reticulum membrane. It catalyses the reaction a 1,2-diacyl-sn-glycero-3-phosphoethanolamine + S-adenosyl-L-methionine = a 1,2-diacyl-sn-glycero-3-phospho-N-methylethanolamine + S-adenosyl-L-homocysteine + H(+). It functions in the pathway phospholipid metabolism; phosphatidylcholine biosynthesis. Catalyzes the first step of the methylation pathway of phosphatidylcholine biosynthesis, the SAM-dependent methylation of phosphatidylethanolamine (PE) to phosphatidylmonomethylethanolamine (PMME). This chain is Phosphatidylethanolamine N-methyltransferase, found in Schizosaccharomyces pombe (strain 972 / ATCC 24843) (Fission yeast).